We begin with the raw amino-acid sequence, 532 residues long: Putative F-box/LRR-repeat protein At3g42770 (532 aa).

The F-box domain occupies 1-46 (MNCLPDELLVQILSFLPTKEATSTSLLSKRWRTLFTLSPNLDFDNS). 3 LRR repeats span residues 113–135 (VSELHLRIDYTKRCHLPSEIFTS), 279–305 (IRNVKTLHLTSSTVKVILLCCKGEIPM), and 398–420 (MNDLKKMQLTEDLLKLPKASPKL).

The protein is Putative F-box/LRR-repeat protein At3g42770 of Arabidopsis thaliana (Mouse-ear cress).